The chain runs to 123 residues: Fluoride-specific ion channel FluC (123 aa).

The next 4 membrane-spanning stretches (helical) occupy residues 7-27, 39-59, 68-88, and 101-121; these read MAIA…SGLL, MVNS…FWGF, FFGT…YETF, and LNIL…FMLA. Na(+)-binding residues include Gly75 and Ser78.

The protein belongs to the fluoride channel Fluc/FEX (TC 1.A.43) family.

Its subcellular location is the cell membrane. The enzyme catalyses fluoride(in) = fluoride(out). With respect to regulation, na(+) is not transported, but it plays an essential structural role and its presence is essential for fluoride channel function. Fluoride-specific ion channel. Important for reducing fluoride concentration in the cell, thus reducing its toxicity. This is Fluoride-specific ion channel FluC from Thermococcus kodakarensis (strain ATCC BAA-918 / JCM 12380 / KOD1) (Pyrococcus kodakaraensis (strain KOD1)).